Reading from the N-terminus, the 270-residue chain is F-actin-capping protein subunit beta (270 aa).

Over residues 245-258 the composition is skewed to polar residues; sequence QTRSQKSTTDSQEQ. A disordered region spans residues 245–270; sequence QTRSQKSTTDSQEQQQKEVIKGLQNL.

This sequence belongs to the F-actin-capping protein beta subunit family. Component of the F-actin capping complex, composed of a heterodimer of an alpha and a beta subunit.

The protein localises to the cytoplasm. It localises to the cytoskeleton. It is found in the actin patch. F-actin-capping proteins bind in a Ca(2+)-independent manner to the fast growing ends of actin filaments (barbed end) thereby blocking the exchange of subunits at these ends. Unlike other capping proteins (such as gelsolin and severin), these proteins do not sever actin filaments. The polypeptide is F-actin-capping protein subunit beta (CAP2) (Candida glabrata (strain ATCC 2001 / BCRC 20586 / JCM 3761 / NBRC 0622 / NRRL Y-65 / CBS 138) (Yeast)).